We begin with the raw amino-acid sequence, 115 residues long: Photosystem II reaction center Psb28 protein (115 aa).

Belongs to the Psb28 family. As to quaternary structure, part of the photosystem II complex.

It is found in the plastid. It localises to the chloroplast thylakoid membrane. In Cyanidium caldarium (Red alga), this protein is Photosystem II reaction center Psb28 protein.